We begin with the raw amino-acid sequence, 2697 residues long: Target of rapamycin homolog (2697 aa).

The interval 1-25 is disordered; it reads MLQQHGISFQMNADRQNKAATTSNR. HEAT repeat units follow at residues 235 to 272, 649 to 687, 689 to 726, 731 to 768, 815 to 853, 863 to 900, and 1073 to 1110; these read LRVNLFFKYIFNAVRDKNPAVRIAGIDALHVVLTIVSQ, QTIYGVLRAVCSVIVNDQDVRVRMQVISCFGQMPRPFLA, LAQPEMLEVQFMALHDEKLEMQQACVTLLGRLAELNPA, RLRLMLLETLSQMQQSGQARLEQHSAKMIAQLAKQSPK, KNLKPLFEKLTHMINDSSSLHKREAALRAIGGICRSTAY, SLLDDLLRILKTVMSNTMRREAIKTLGILGAIDPYTHK, and KYTGELIPYLLTVLQTDKTKERVLTVKVMESIQKLTHC. The region spanning 1438–2153 is the FAT domain; it reads VLGRWAEQTK…IYALTVASRS (716 aa). Disordered regions lie at residues 1945–1981 and 2017–2039; these read TVISPPQQPQQPKKMHIPPVTRATSPPPPAQKSPQPA and SNSSLPPQHHHVSPLSNDSPSNS. Residues 1969–1981 are compositionally biased toward pro residues; sequence SPPPPAQKSPQPA. Polar residues predominate over residues 2030–2039; that stretch reads PLSNDSPSNS. A PI3K/PI4K catalytic domain is found at 2332–2647; it reads FSSKMNVITS…TTDSIMETIK (316 aa). The interval 2338–2344 is G-loop; it reads VITSKQR. The interval 2512–2520 is catalytic loop; that stretch reads GLGDRHPSN. An activation loop region spans residues 2532–2557; that stretch reads HIDFGDCFEVAMLREKFPERVPFRLT. The tract at residues 2615–2635 is disordered; that stretch reads DPKTRKDTGGRQNMAGAVLPS. In terms of domain architecture, FATC spans 2665-2697; that stretch reads EPLQVTEQLAMLTEQATSPLNLCQSYIGWCPFW.

Belongs to the PI3/PI4-kinase family. In terms of tissue distribution, ubiquitous. Expressed in all major tissues and organs, including the intestine, gonads and hypodermal cells. Expressed in neurons.

It localises to the nucleus. The catalysed reaction is L-seryl-[protein] + ATP = O-phospho-L-seryl-[protein] + ADP + H(+). The enzyme catalyses L-threonyl-[protein] + ATP = O-phospho-L-threonyl-[protein] + ADP + H(+). In terms of biological role, serine/threonine-protein kinase that regulates the mRNA translation machinery, probably by modulating the activity of translation factors such as eIF-4G and eIF-2. It may have some protein kinase activity instead of lipid kinase activity. May play a role in P-granule degradation by autophagy in somatic cells during embryogenesis. Required, during larval development, for the establishment of the proper number of germline progenitors, probably upstream of rsks-1 and ife-1. Required for larval development. May act as a mediator of lifespan regulation by insulin signaling and nutrient sensing. The protein is Target of rapamycin homolog of Caenorhabditis elegans.